Reading from the N-terminus, the 112-residue chain is uncharacterized protein (112 aa).

2 helical membrane passes run 7 to 26 and 36 to 58; these read PSFH…TLDY and TYMH…FFLY.

It localises to the membrane. This is an uncharacterized protein from Saccharomyces cerevisiae (strain ATCC 204508 / S288c) (Baker's yeast).